Here is a 469-residue protein sequence, read N- to C-terminus: Probable Xaa-Pro aminopeptidase AN0832 (469 aa).

Positions 260, 271, 398, and 437 each coordinate Mn(2+).

This sequence belongs to the peptidase M24B family. Mn(2+) serves as cofactor.

The catalysed reaction is Release of any N-terminal amino acid, including proline, that is linked to proline, even from a dipeptide or tripeptide.. Functionally, catalyzes the removal of a penultimate prolyl residue from the N-termini of peptides. In Emericella nidulans (strain FGSC A4 / ATCC 38163 / CBS 112.46 / NRRL 194 / M139) (Aspergillus nidulans), this protein is Probable Xaa-Pro aminopeptidase AN0832.